The sequence spans 333 residues: PDZ domain-containing protein GIPC1 (333 aa).

Basic residues predominate over residues 1–11 (MPLGLGRRKKA). The tract at residues 1 to 54 (MPLGLGRRKKAPPLVENEEAEPGRGGLGVGEPGPLGGGGSGGPQMGLPPPPPAL) is disordered. The span at 23 to 44 (GRGGLGVGEPGPLGGGGSGGPQ) shows a compositional bias: gly residues. The residue at position 68 (Ser-68) is a Phosphoserine. The PDZ domain maps to 133-213 (EVEVFKSEDA…GRTFTLKLTE (81 aa)). Phosphoserine occurs at positions 222, 225, and 232. The segment at 223–244 (QRSAGGRPGSGPQLGTGRGTLR) is disordered. The segment covering 228-240 (GRPGSGPQLGTGR) has biased composition (gly residues). The residue at position 242 (Thr-242) is a Phosphothreonine. Residue Ser-247 is modified to Phosphoserine.

This sequence belongs to the GIPC family. In terms of assembly, interacts with GLUT1 (C-terminus), ACTN1, KIF1B, MYO6, PLEKHG5, SDC4/syndecan-4 and SEMA4C/semaphorin-4C. Interacts with RGS19 C-terminus. Interacts with HTLV-I Tax through the PDZ domain. In terms of tissue distribution, widely expressed. Expressed in skeletal muscle (at protein level).

The protein localises to the cytoplasm. The protein resides in the membrane. In terms of biological role, may be involved in G protein-linked signaling. The polypeptide is PDZ domain-containing protein GIPC1 (GIPC1) (Homo sapiens (Human)).